Consider the following 614-residue polypeptide: ATP-dependent RNA helicase dbp-3 (614 aa).

The interval Met-1–Asn-138 is disordered. Basic and acidic residues predominate over residues Arg-9–Lys-36. Composition is skewed to basic residues over residues Glu-37 to Lys-58 and Lys-91 to Lys-109. Residues Glu-117–Asn-138 are compositionally biased toward low complexity. The Q motif signature appears at Met-180–Ser-207. A Helicase ATP-binding domain is found at Trp-210–Val-394. Position 223–230 (Ala-223–Thr-230) interacts with ATP. Positions Asp-340–Asp-343 match the DEAD box motif. The region spanning Arg-435–Gly-584 is the Helicase C-terminal domain.

This sequence belongs to the DEAD box helicase family. DDX5/DBP2 subfamily.

The protein localises to the nucleus. The protein resides in the nucleolus. The catalysed reaction is ATP + H2O = ADP + phosphate + H(+). Functionally, ATP-dependent RNA helicase required for 60S ribosomal subunit synthesis. Involved in efficient pre-rRNA processing, predominantly at site A3, which is necessary for the normal formation of 25S and 5.8S rRNAs. In Neurospora crassa (strain ATCC 24698 / 74-OR23-1A / CBS 708.71 / DSM 1257 / FGSC 987), this protein is ATP-dependent RNA helicase dbp-3 (dbp-3).